The following is a 343-amino-acid chain: Probable long-chain-alcohol O-fatty-acyltransferase 2 (343 aa).

8 helical membrane-spanning segments follow: residues 7 to 27 (NLIK…YISS), 36 to 56 (LLSL…FSSV), 58 to 78 (FCVI…FLFA), 117 to 137 (PMSK…LHVY), 148 to 168 (FAFL…ILVF), 235 to 255 (GMLA…FYVI), 260 to 280 (TWEV…EIAM), and 292 to 312 (AVSG…LFYP).

This sequence belongs to the wax synthase family.

It is found in the membrane. It catalyses the reaction a long chain fatty alcohol + a fatty acyl-CoA = a wax ester + CoA. In terms of biological role, catalyzes the final step in the synthesis of long-chain linear esters (waxes). The chain is Probable long-chain-alcohol O-fatty-acyltransferase 2 (AT2) from Arabidopsis thaliana (Mouse-ear cress).